We begin with the raw amino-acid sequence, 362 residues long: MARFLVALLAATLVAVQAGGQLGHAAPATGEVFWRAVLPHSPLPDAVLRLLKQPAAESTSFVRDPEDRPPFDYRDYSRSSSDDEPSKSTVAASGAGGFDYDNYSGADERRGATDEYKAPSSSLAGSGAYMARGGKAETTTVFFHEEAVRVGRRLPFHFPPATPAALGFLPRQVADSVPFTTAALPGILATFGIASDSTTVPSMEATLRACESPTIAGESKFCATSLEALVERAMGVLGTRDIRPVTSTLPRAGAPLQTYTVVAVQPVEGGPVFVACHDEAYPYTVYRCHTTGPSRAYTVDMEGARGADAVTIAAVCHTDTSLWNPEHVSFKLLGTKPGGTPVCHLMPYGHIIWAKNVKRSPA.

A signal peptide spans 1–20; the sequence is MARFLVALLAATLVAVQAGG. Residues 58-94 are disordered; sequence STSFVRDPEDRPPFDYRDYSRSSSDDEPSKSTVAASG. Basic and acidic residues predominate over residues 63-86; the sequence is RDPEDRPPFDYRDYSRSSSDDEPS. An N-linked (GlcNAc...) asparagine glycan is attached at Asn-102. A BURP domain is found at 142–356; sequence FFHEEAVRVG…PYGHIIWAKN (215 aa).

Specifically expressed in anthers, in the tapetum and microspores (at protein level).

Its function is as follows. Required for pollen development. Probably synthesized in the tapetum, packaged in Ubisch bodies and transported at appropriate stages to the micropsores. This is Protein RAFTIN 1B (RAFTIN1B) from Triticum aestivum (Wheat).